A 66-amino-acid polypeptide reads, in one-letter code: Large ribosomal subunit protein uL29 (66 aa).

This sequence belongs to the universal ribosomal protein uL29 family.

The sequence is that of Large ribosomal subunit protein uL29 from Thermococcus sibiricus (strain DSM 12597 / MM 739).